A 1349-amino-acid polypeptide reads, in one-letter code: Spike glycoprotein (1349 aa).

An N-terminal signal peptide occupies residues 1–13; it reads MFFILLITLPSVF. Residues 14 to 1293 are Extracellular-facing; sequence AVIGDLKCNT…GTYEYYVKWP (1280 aa). Residues 15 to 298 form the BetaCoV S1-NTD domain; the sequence is VIGDLKCNTS…DFMSEIMCKT (284 aa). 7 disulfide bridges follow: C21/C165, C160/C193, C172/C252, C286/C296, C331/C356, C374/C427, and C386/C601. N22, N59, and N133 each carry an N-linked (GlcNAc...) asparagine; by host glycan. N-linked (GlcNAc...) asparagine; by host glycosylation is present at N198. A BetaCoV S1-CTD domain is found at 329-603; sequence PNCDIEAWLN…DVNSGTTCST (275 aa). N437, N456, N512, N611, N635, N662, N682, N700, N725, N774, and N881 each carry an N-linked (GlcNAc...) asparagine; by host glycan. 2 fusion peptide regions span residues 900–921 and 919–939; these read SAIE…VQAY and QAYN…VQSY. The N-linked (GlcNAc...) asparagine; by host glycan is linked to N923. Residues C924 and C935 are joined by a disulfide bond. The heptad repeat 1 stretch occupies residues 1000 to 1050; that stretch reads QKLIASAFNNALDSIQEGFDATNSALVKIQAVVNANAEALNNLLQQLSNRF. A coiled-coil region spans residues 1029–1073; the sequence is QAVVNANAEALNNLLQQLSNRFGAISASLQEILSRLDALEAKAQI. N-linked (GlcNAc...) asparagine; by host glycosylation is found at N1180, N1210, N1220, N1239, N1253, and N1274. Residues 1244–1282 are heptad repeat 2; the sequence is APDLSFDYINVTFLDLQDEMNRLQEAIKVLNHSYINLKD. Residues 1255 to 1283 adopt a coiled-coil conformation; it reads TFLDLQDEMNRLQEAIKVLNHSYINLKDI. A helical membrane pass occupies residues 1294–1314; that stretch reads WYVWLLICLAGVVMLVLLFFI. At 1315 to 1349 the chain is on the cytoplasmic side; sequence CCCTGCGTSCFKKCGGCFDDYTGHQEFVIKTSHDD. The short motif at 1345 to 1349 is the KxHxx element; it reads TSHDD.

The protein belongs to the betacoronaviruses spike protein family. As to quaternary structure, homotrimer; each monomer consists of a S1 and a S2 subunit. The resulting peplomers protrude from the virus surface as spikes. In terms of processing, specific enzymatic cleavages in vivo yield mature proteins. The precursor is processed into S1 and S2 by host cell furin or another cellular protease to yield the mature S1 and S2 proteins. Additionally, a second cleavage leads to the release of a fusion peptide after viral attachment to host cell receptor. The cytoplasmic Cys-rich domain is palmitoylated. Spike glycoprotein is digested within host endosomes.

The protein resides in the virion membrane. Its subcellular location is the host endoplasmic reticulum-Golgi intermediate compartment membrane. The protein localises to the host cell membrane. In terms of biological role, attaches the virion to the cell membrane by interacting with host receptor, initiating the infection. Its function is as follows. Mediates fusion of the virion and cellular membranes by acting as a class I viral fusion protein. Under the current model, the protein has at least three conformational states: pre-fusion native state, pre-hairpin intermediate state, and post-fusion hairpin state. During viral and target cell membrane fusion, the coiled coil regions (heptad repeats) assume a trimer-of-hairpins structure, positioning the fusion peptide in close proximity to the C-terminal region of the ectodomain. The formation of this structure appears to drive apposition and subsequent fusion of viral and target cell membranes. Functionally, acts as a viral fusion peptide which is unmasked following S2 cleavage occurring upon virus endocytosis. This chain is Spike glycoprotein, found in Porcine hemagglutinating encephalomyelitis virus (strain IAF-404) (HEV).